The chain runs to 314 residues: Secreted frizzled-related protein 1 (314 aa).

The signal sequence occupies residues 1–31; that stretch reads MGIGRSEGGRRGAALGVLLALGAALLAVGSA. The 117-residue stretch at 53 to 169 folds into the FZ domain; sequence TKPPQCVDIP…FPEGDVCIAM (117 aa). 5 disulfides stabilise this stretch: cysteine 58–cysteine 121, cysteine 68–cysteine 114, cysteine 105–cysteine 140, cysteine 129–cysteine 166, and cysteine 133–cysteine 157. An N-linked (GlcNAc...) asparagine glycan is attached at asparagine 173. Cystine bridges form between cysteine 186–cysteine 256, cysteine 189–cysteine 258, and cysteine 203–cysteine 306. Residues 186–306 enclose the NTR domain; the sequence is CPPCDNELKS…FMKKMKNHEC (121 aa).

Belongs to the secreted frizzled-related protein (sFRP) family. Interacts with WNT1, WNT2 and FRZD6. Interacts with WNT4, WNT8 and MYOC. In terms of tissue distribution, widely expressed. Absent from lung, liver and peripheral blood leukocytes. Highest levels in heart and fetal kidney. Also expressed in testis, ovary, fetal brain and lung, leiomyomal cells, myometrial cells and vascular smooth muscle cells. Expressed in foreskin fibroblasts and in keratinocytes.

The protein resides in the secreted. In terms of biological role, soluble frizzled-related proteins (sFRPS) function as modulators of Wnt signaling through direct interaction with Wnts. They have a role in regulating cell growth and differentiation in specific cell types. SFRP1 decreases intracellular beta-catenin levels. Has antiproliferative effects on vascular cells, in vitro and in vivo, and can induce, in vivo, an angiogenic response. In vascular cell cycle, delays the G1 phase and entry into the S phase. In kidney development, inhibits tubule formation and bud growth in metanephroi. Inhibits WNT1/WNT4-mediated TCF-dependent transcription. The protein is Secreted frizzled-related protein 1 (SFRP1) of Homo sapiens (Human).